We begin with the raw amino-acid sequence, 426 residues long: Tyrosine--tRNA ligase (426 aa).

Tyr-38 is an L-tyrosine binding site. The short motif at 43–52 (PTADSLHIGS) is the 'HIGH' region element. L-tyrosine is bound by residues Tyr-176 and Gln-180. Positions 236 to 240 (KFGKT) match the 'KMSKS' region motif. Position 239 (Lys-239) interacts with ATP. Residues 359-426 (QTIVEVLTQS…KKLFNLYIWK (68 aa)) form the S4 RNA-binding domain.

The protein belongs to the class-I aminoacyl-tRNA synthetase family. TyrS type 1 subfamily. As to quaternary structure, homodimer.

It localises to the cytoplasm. It carries out the reaction tRNA(Tyr) + L-tyrosine + ATP = L-tyrosyl-tRNA(Tyr) + AMP + diphosphate + H(+). Functionally, catalyzes the attachment of tyrosine to tRNA(Tyr) in a two-step reaction: tyrosine is first activated by ATP to form Tyr-AMP and then transferred to the acceptor end of tRNA(Tyr). The polypeptide is Tyrosine--tRNA ligase (Aliivibrio salmonicida (strain LFI1238) (Vibrio salmonicida (strain LFI1238))).